Consider the following 156-residue polypeptide: Large ribosomal subunit protein uL15 (156 aa).

A disordered region spans residues 26-46 (GIGCGKGKTSGRGHKGQKARS). Residues 34-43 (TSGRGHKGQK) are compositionally biased toward basic residues.

This sequence belongs to the universal ribosomal protein uL15 family. As to quaternary structure, part of the 50S ribosomal subunit.

Binds to the 23S rRNA. In Ehrlichia canis (strain Jake), this protein is Large ribosomal subunit protein uL15.